A 324-amino-acid polypeptide reads, in one-letter code: HPr kinase/phosphorylase (324 aa).

Catalysis depends on residues His-146 and Lys-167. 161–168 (GDSGLGKS) contacts ATP. Residue Ser-168 coordinates Mg(2+). The Proton acceptor; for phosphorylation activity. Proton donor; for dephosphorylation activity role is filled by Asp-185. The important for the catalytic mechanism of both phosphorylation and dephosphorylation stretch occupies residues 209 to 218 (LEVRGLGLLD). Glu-210 serves as a coordination point for Mg(2+). Arg-250 is an active-site residue. Positions 271-276 (QVAAGR) are important for the catalytic mechanism of dephosphorylation.

This sequence belongs to the HPrK/P family. Homohexamer. It depends on Mg(2+) as a cofactor.

It carries out the reaction [HPr protein]-L-serine + ATP = [HPr protein]-O-phospho-L-serine + ADP + H(+). The catalysed reaction is [HPr protein]-O-phospho-L-serine + phosphate + H(+) = [HPr protein]-L-serine + diphosphate. Its function is as follows. Catalyzes the ATP- as well as the pyrophosphate-dependent phosphorylation of a specific serine residue in HPr, a phosphocarrier protein of the phosphoenolpyruvate-dependent sugar phosphotransferase system (PTS). HprK/P also catalyzes the pyrophosphate-producing, inorganic phosphate-dependent dephosphorylation (phosphorolysis) of seryl-phosphorylated HPr (P-Ser-HPr). This is HPr kinase/phosphorylase from Ralstonia nicotianae (strain ATCC BAA-1114 / GMI1000) (Ralstonia solanacearum).